Consider the following 568-residue polypeptide: Potassium-transporting ATPase potassium-binding subunit (568 aa).

A run of 10 helical transmembrane segments spans residues Thr3–Gly23, Phe64–Val84, Phe133–Ile153, Ile179–Gly199, Met255–Tyr275, Leu281–Val301, Phe375–Ile395, Ile418–Ser438, Ile497–Leu517, and Thr536–Val556.

This sequence belongs to the KdpA family. The system is composed of three essential subunits: KdpA, KdpB and KdpC.

It localises to the cell inner membrane. Its function is as follows. Part of the high-affinity ATP-driven potassium transport (or Kdp) system, which catalyzes the hydrolysis of ATP coupled with the electrogenic transport of potassium into the cytoplasm. This subunit binds the periplasmic potassium ions and delivers the ions to the membrane domain of KdpB through an intramembrane tunnel. The sequence is that of Potassium-transporting ATPase potassium-binding subunit from Bacteroides thetaiotaomicron (strain ATCC 29148 / DSM 2079 / JCM 5827 / CCUG 10774 / NCTC 10582 / VPI-5482 / E50).